A 294-amino-acid chain; its full sequence is 4-hydroxy-tetrahydrodipicolinate synthase (294 aa).

Thr46 is a binding site for pyruvate. Tyr135 functions as the Proton donor/acceptor in the catalytic mechanism. Lys164 serves as the catalytic Schiff-base intermediate with substrate. A pyruvate-binding site is contributed by Ile205.

This sequence belongs to the DapA family. In terms of assembly, homotetramer; dimer of dimers.

It localises to the cytoplasm. It catalyses the reaction L-aspartate 4-semialdehyde + pyruvate = (2S,4S)-4-hydroxy-2,3,4,5-tetrahydrodipicolinate + H2O + H(+). It participates in amino-acid biosynthesis; L-lysine biosynthesis via DAP pathway; (S)-tetrahydrodipicolinate from L-aspartate: step 3/4. Its function is as follows. Catalyzes the condensation of (S)-aspartate-beta-semialdehyde [(S)-ASA] and pyruvate to 4-hydroxy-tetrahydrodipicolinate (HTPA). This Nitratiruptor sp. (strain SB155-2) protein is 4-hydroxy-tetrahydrodipicolinate synthase.